We begin with the raw amino-acid sequence, 163 residues long: RRM-domain-containing protein ECU01_0840 (163 aa).

Residues 84–163 (CSVKLSNLPL…SLGLSAEIAR (80 aa)) form the RRM domain.

The chain is RRM-domain-containing protein ECU01_0840 from Encephalitozoon cuniculi (strain GB-M1) (Microsporidian parasite).